The sequence spans 171 residues: Cardioactive peptide (171 aa).

The first 26 residues, 1 to 26 (MQMYHVVLGCSLAILLVILDIPQASC), serve as a signal peptide directing secretion. Residues 27 to 49 (DDVVIQKRQVDPAEMDRLLDPKR) constitute a propeptide that is removed on maturation. Cys54 and Cys60 are oxidised to a cystine. Position 60 is a cysteine amide (Cys60). Positions 64–171 (RSDESMGTLV…QEEITKPWSR (108 aa)) are excised as a propeptide. The disordered stretch occupies residues 116 to 171 (QSNQFGAGMDRPLPLPIAGYRRKRFADPESQAPAPHSNLPRATSQLQEEITKPWSR).

In terms of tissue distribution, central nervous system; most neurons exhibit coexpression with burs.

It localises to the secreted. Its function is as follows. Cardioregulatory neurohormone that increases heart beat rate during adult wing inflation; has no effect on beat amplitude. The effect of CCAP is both ino- and chronotropic. The chain is Cardioactive peptide from Periplaneta americana (American cockroach).